Reading from the N-terminus, the 176-residue chain is 2-oxo-4-hydroxy-4-carboxy-5-ureidoimidazoline decarboxylase (176 aa).

Residue histidine 70 is the Proton donor; for OHCU decarboxylase activity of the active site. Residues proline 71, 83 to 87 (SQEEQ), and 118 to 122 (FIMAV) each bind substrate. Residues 72–96 (DLGERTEMTDESQEEQASAGLDRLP) are disordered.

Belongs to the OHCU decarboxylase family.

It carries out the reaction 5-hydroxy-2-oxo-4-ureido-2,5-dihydro-1H-imidazole-5-carboxylate + H(+) = (S)-allantoin + CO2. It participates in purine metabolism; urate degradation; (S)-allantoin from urate: step 3/3. Catalyzes the stereoselective decarboxylation of 2-oxo-4-hydroxy-4-carboxy-5-ureidoimidazoline (OHCU) to (S)-allantoin. The sequence is that of 2-oxo-4-hydroxy-4-carboxy-5-ureidoimidazoline decarboxylase from Halalkalicoccus jeotgali (strain DSM 18796 / CECT 7217 / JCM 14584 / KCTC 4019 / B3).